Reading from the N-terminus, the 155-residue chain is Small ribosomal subunit protein uS7 (155 aa).

Belongs to the universal ribosomal protein uS7 family. Part of the 30S ribosomal subunit. Contacts proteins S9 and S11.

Its function is as follows. One of the primary rRNA binding proteins, it binds directly to 16S rRNA where it nucleates assembly of the head domain of the 30S subunit. Is located at the subunit interface close to the decoding center, probably blocks exit of the E-site tRNA. The chain is Small ribosomal subunit protein uS7 from Prosthecochloris aestuarii (strain DSM 271 / SK 413).